Here is a 1172-residue protein sequence, read N- to C-terminus: Lysylphosphatidylglycerol biosynthesis bifunctional protein LysX (1172 aa).

A disordered region spans residues 1–34; it reads MGLHLTVPGLRRDGRGVQSNSHDTSSKTTADISR. Residues 1–663 are phosphatidylglycerol lysyltransferase; sequence MGLHLTVPGL…LLHHDGSAPD (663 aa). Residues 17–31 are compositionally biased toward polar residues; it reads VQSNSHDTSSKTTAD. 7 helical membrane-spanning segments follow: residues 80 to 100, 122 to 142, 146 to 166, 177 to 197, 214 to 234, 272 to 292, and 612 to 632; these read VPAA…LASV, FPDT…ALTA, IAWL…AAEI, FGEN…VLGY, AVWL…VELF, AIFG…LFLS, and VIPR…LPFS. A lysine--tRNA ligase region spans residues 664–1172; sequence VSGLRQVGLT…TLPFPLAKPH (509 aa). Positions 726 to 804 form a DNA-binding region, OB; sequence VSVSGRIMRI…SLIVSGWRLI (79 aa). Mg(2+) is bound by residues aspartate 1084 and glutamate 1091.

It in the N-terminal section; belongs to the LPG synthetase family. The protein in the C-terminal section; belongs to the class-II aminoacyl-tRNA synthetase family. It depends on Mg(2+) as a cofactor.

The protein localises to the cell membrane. It catalyses the reaction tRNA(Lys) + L-lysine + ATP = L-lysyl-tRNA(Lys) + AMP + diphosphate. It carries out the reaction L-lysyl-tRNA(Lys) + a 1,2-diacyl-sn-glycero-3-phospho-(1'-sn-glycerol) = a 1,2-diacyl-sn-glycero-3-phospho-1'-(3'-O-L-lysyl)-sn-glycerol + tRNA(Lys). In terms of biological role, catalyzes the production of L-lysyl-tRNA(Lys)transfer and the transfer of a lysyl group from L-lysyl-tRNA(Lys) to membrane-bound phosphatidylglycerol (PG), which produces lysylphosphatidylglycerol (LPG), one of the components of the bacterial membrane with a positive net charge. LPG synthesis contributes to the resistance to cationic antimicrobial peptides (CAMPs) and likely protects M.tuberculosis against the CAMPs produced by competiting microorganisms (bacteriocins). In fact, the modification of anionic phosphatidylglycerol with positively charged L-lysine results in repulsion of the peptides. The protein is Lysylphosphatidylglycerol biosynthesis bifunctional protein LysX (lysX) of Mycobacterium bovis (strain ATCC BAA-935 / AF2122/97).